The following is a 248-amino-acid chain: MAGHSKWANIKHRKGAQDAKRGKIFTKLIKEITVAAKIGGGDLEANARLRLAVDKAKQANMPKDNIERAIKKGTGDLDGVTYEEGTFEGYGPGGVAVIVEFMTDNRTRTVADVRHSFNKFGGSLGVSGSVAFMFDRKGQIIFGENSDFEKIFEVALEAGAEDVNDEDGVTEVITAPADFETVRNTLAEQGLTPESAEVTMIPQNMTAVEGKQAESLMKMIDMLEDNDDVQNVFANFDISDEEMARIMG.

It belongs to the TACO1 family.

It localises to the cytoplasm. This is Probable transcriptional regulatory protein Pcar_2335 from Syntrophotalea carbinolica (strain DSM 2380 / NBRC 103641 / GraBd1) (Pelobacter carbinolicus).